A 255-amino-acid chain; its full sequence is Small ribosomal subunit protein uS2 (255 aa).

A disordered region spans residues 232–255 (ASGRDLGASEEVPVEPALEEASEA).

It belongs to the universal ribosomal protein uS2 family.

The protein is Small ribosomal subunit protein uS2 of Sinorhizobium medicae (strain WSM419) (Ensifer medicae).